Here is a 528-residue protein sequence, read N- to C-terminus: Poly(A) RNA polymerase GLD2 (528 aa).

Disordered stretches follow at residues 1–41 (MYPN…QPQQ) and 99–121 (RDQSPLISPASPSSSFQNRKRRS). Composition is skewed to low complexity over residues 16 to 32 (PCEQQQPPLEQSQEQPL) and 102 to 113 (SPLISPASPSSS). Mg(2+) is bound by residues Asp-259 and Asp-261. Residues 428-481 (LGDLLLGFLKYFAIEFDWSKDIISVREAKALPRSDDYEWRNKFICVEEPYDRTN) form the PAP-associated domain.

It belongs to the DNA polymerase type-B-like family. GLD2 subfamily. As to quaternary structure, component of a complex at least composed of cpeb1, cpsf1, tent2/gld2, pabpc1/ePAB, parn and sympk. Following oocyte maturation, parn is expelled from the complex. Interacts with rbm9 and sympk. The cofactor is Mg(2+). Mn(2+) is required as a cofactor.

The protein resides in the cytoplasm. It carries out the reaction RNA(n) + ATP = RNA(n)-3'-adenine ribonucleotide + diphosphate. Cytoplasmic poly(A) RNA polymerase that adds successive AMP monomers to the 3'-end of specific RNAs, forming a poly(A) tail. In contrast to the canonical nuclear poly(A) RNA polymerase, it only adds poly(A) to selected cytoplasmic mRNAs during oocyte maturation. Plays a central role during oocyte maturation by mediating polyadenylation of dormant mRNAs, which contain 5'AAUAAA-3' sequence in their 3'-UTR. In immature oocytes, polyadenylation of poly(A) tails is counteracted by the ribonuclease parn. During maturation parn is excluded from the ribonucleoprotein complex, allowing poly(A) elongation and activation of mRNAs. May not play a role in replication-dependent histone mRNA degradation. This is Poly(A) RNA polymerase GLD2 (tent2) from Xenopus tropicalis (Western clawed frog).